The chain runs to 399 residues: Acetate kinase 2 (399 aa).

Asparagine 10 contacts Mg(2+). An ATP-binding site is contributed by lysine 17. Arginine 89 serves as a coordination point for substrate. Aspartate 146 serves as the catalytic Proton donor/acceptor. ATP-binding positions include 206 to 210 (HLGNG), 281 to 283 (DCR), and 329 to 333 (GIGEN). A Mg(2+)-binding site is contributed by glutamate 384.

Belongs to the acetokinase family. As to quaternary structure, homodimer. Requires Mg(2+) as cofactor. The cofactor is Mn(2+).

Its subcellular location is the cytoplasm. The enzyme catalyses acetate + ATP = acetyl phosphate + ADP. It functions in the pathway metabolic intermediate biosynthesis; acetyl-CoA biosynthesis; acetyl-CoA from acetate: step 1/2. In terms of biological role, catalyzes the formation of acetyl phosphate from acetate and ATP. Can also catalyze the reverse reaction. The sequence is that of Acetate kinase 2 from Neisseria meningitidis serogroup B (strain ATCC BAA-335 / MC58).